A 699-amino-acid chain; its full sequence is Macoilin-2 (699 aa).

4 helical membrane-spanning segments follow: residues 28 to 48 (TFLY…DFVL), 75 to 95 (AFSV…LLFI), 120 to 140 (VCLP…AIRF), and 154 to 174 (FAAH…KSYV). Disordered stretches follow at residues 219-289 (AAAA…SILP), 322-411 (LLKD…PNNQ), 432-451 (LQAS…SLGT), and 679-699 (FMDT…PLKK). Residues N241, N267, N345, and N365 are each glycosylated (N-linked (GlcNAc...) asparagine). The segment covering 257 to 271 (LEYREKERGKNESKK) has biased composition (basic and acidic residues). Positions 329–346 (SSSSSSTSSNSNKNYKNA) are enriched in low complexity. The segment covering 366-382 (GSVPSSSGPSSSASSSS) has biased composition (low complexity). An N-linked (GlcNAc...) asparagine glycan is attached at N690.

It belongs to the macoilin family.

Its subcellular location is the nucleus membrane. It is found in the cell projection. The protein resides in the axon. It localises to the rough endoplasmic reticulum membrane. In terms of biological role, may play a role in the regulation of neuronal activity. This Danio rerio (Zebrafish) protein is Macoilin-2.